The chain runs to 485 residues: E-selectin (485 aa).

The first 22 residues, 1–22 (MIVSQYLSALTFVLLLFKESRT), serve as a signal peptide directing secretion. In terms of domain architecture, C-type lectin spans 23 to 140 (WSYHASTEMM…CTKQKLALCY (118 aa)). Residues 23 to 430 (WSYHASTEMM…CEAPTVSQTP (408 aa)) lie on the Extracellular side of the membrane. Disulfide bonds link Cys41-Cys139, Cys112-Cys131, Cys144-Cys155, Cys149-Cys164, Cys166-Cys175, Cys181-Cys224, Cys194-Cys206, Cys210-Cys237, Cys242-Cys286, Cys255-Cys268, Cys272-Cys299, Cys304-Cys349, Cys335-Cys362, Cys367-Cys408, and Cys394-Cys421. N-linked (GlcNAc...) asparagine glycosylation is found at Asn61, Asn79, and Asn88. Ca(2+)-binding residues include Glu102, Asn104, and Glu110. A carbohydrate is bound by residues 102 to 110 (EPNNKQSDE), 114 to 119 (EIYIKR), and 127 to 129 (NDE). Residues Asn127 and Asp128 each coordinate Ca(2+). Residues 141-176 (KAACNPTPCGSHGECVETINNYTCQCHPGFKGLKCE) enclose the EGF-like domain. Asn161 carries an N-linked (GlcNAc...) asparagine glycan. Sushi domains are found at residues 179–239 (VTCP…KCNV), 240–301 (VKCD…TCKA), 302–364 (VSCA…VCEV), and 365–423 (VRCS…TCEA). N-linked (GlcNAc...) asparagine glycosylation occurs at Asn203. Asn265 carries an N-linked (GlcNAc...) asparagine glycan. N-linked (GlcNAc...) asparagine glycans are attached at residues Asn312 and Asn316. Residues Asn379 and Asn401 are each glycosylated (N-linked (GlcNAc...) asparagine). Residues 431 to 453 (LAVGLSTAGVSLVTIPSFLFWLL) traverse the membrane as a helical segment. Topologically, residues 454 to 485 (KRLQKKAKKFSPASSCSSLKSNGCYSTPSKLI) are cytoplasmic. The interval 466–485 (ASSCSSLKSNGCYSTPSKLI) is disordered.

Belongs to the selectin/LECAM family. As to quaternary structure, interacts with SELPLG/PSGL1 and PODXL2 through the sialyl Lewis X epitope. SELPLG sulfation appears not to be required for this interaction.

Its subcellular location is the cell membrane. Cell-surface glycoprotein having a role in immunoadhesion. Mediates in the adhesion of blood neutrophils in cytokine-activated endothelium through interaction with SELPLG/PSGL1. May have a role in capillary morphogenesis. This chain is E-selectin (SELE), found in Bos taurus (Bovine).